A 71-amino-acid chain; its full sequence is Ranatuerin-2P (71 aa).

The N-terminal stretch at 1–20 is a signal peptide; the sequence is MFTMKKSLLLFFFLGTISLS. The propeptide occupies 21-44; sequence LCEQERGADEDDGVEITEEEVKRG. A disulfide bridge connects residues cysteine 66 and cysteine 71.

In terms of tissue distribution, expressed by the skin glands.

Its subcellular location is the secreted. In terms of biological role, antibacterial activity against Gram-positive bacterium S.aureus and Gram-negative bacterium E.coli. Has activity against C.albicans. This chain is Ranatuerin-2P, found in Lithobates pipiens (Northern leopard frog).